Reading from the N-terminus, the 235-residue chain is tRNA (guanine-N(1)-)-methyltransferase (235 aa).

Residues glycine 112 and isoleucine 132–leucine 137 each bind S-adenosyl-L-methionine.

It belongs to the RNA methyltransferase TrmD family. In terms of assembly, homodimer.

The protein localises to the cytoplasm. It catalyses the reaction guanosine(37) in tRNA + S-adenosyl-L-methionine = N(1)-methylguanosine(37) in tRNA + S-adenosyl-L-homocysteine + H(+). In terms of biological role, specifically methylates guanosine-37 in various tRNAs. This chain is tRNA (guanine-N(1)-)-methyltransferase, found in Cytophaga hutchinsonii (strain ATCC 33406 / DSM 1761 / CIP 103989 / NBRC 15051 / NCIMB 9469 / D465).